Here is a 308-residue protein sequence, read N- to C-terminus: tRNA pseudouridine synthase B (308 aa).

Residue D49 is the Nucleophile of the active site.

It belongs to the pseudouridine synthase TruB family. Type 1 subfamily.

The catalysed reaction is uridine(55) in tRNA = pseudouridine(55) in tRNA. Functionally, responsible for synthesis of pseudouridine from uracil-55 in the psi GC loop of transfer RNAs. This Nitrosococcus oceani (strain ATCC 19707 / BCRC 17464 / JCM 30415 / NCIMB 11848 / C-107) protein is tRNA pseudouridine synthase B.